We begin with the raw amino-acid sequence, 420 residues long: Glucose-1-phosphate adenylyltransferase (420 aa).

Alpha-D-glucose 1-phosphate-binding positions include Y107, G172, 187-188 (EK), and S205.

The protein belongs to the bacterial/plant glucose-1-phosphate adenylyltransferase family. As to quaternary structure, homotetramer.

The enzyme catalyses alpha-D-glucose 1-phosphate + ATP + H(+) = ADP-alpha-D-glucose + diphosphate. It functions in the pathway glycan biosynthesis; glycogen biosynthesis. In terms of biological role, involved in the biosynthesis of ADP-glucose, a building block required for the elongation reactions to produce glycogen. Catalyzes the reaction between ATP and alpha-D-glucose 1-phosphate (G1P) to produce pyrophosphate and ADP-Glc. The chain is Glucose-1-phosphate adenylyltransferase from Rhizobium leguminosarum bv. trifolii (strain WSM2304).